Consider the following 214-residue polypeptide: Histone H1.1 (214 aa).

A disordered region spans residues 1–43 (MSETAPVPQPASVAPEKPAATKKTRKPAKAAVPRKKPAGPSVS). Ser-2 is modified (N-acetylserine). A phosphoserine mark is found at Ser-2 and Ser-12. At Lys-17 the chain carries N6-acetyllysine. Over residues 20–37 (ATKKTRKPAKAAVPRKKP) the composition is skewed to basic residues. Lys-36 bears the N6-(beta-hydroxybutyryl)lysine mark. The region spanning 38–111 (AGPSVSELIV…GAAGSFKLNK (74 aa)) is the H15 domain. Ser-43 is subject to Phosphoserine. Lys-54 carries the N6-(beta-hydroxybutyryl)lysine modification. Arg-56 carries the citrulline modification. N6-(beta-hydroxybutyryl)lysine is present on Lys-66. Position 67 is a phosphoserine (Ser-67). Lys-77 is subject to N6-acetyllysine. Residue Lys-87 is modified to N6-(beta-hydroxybutyryl)lysine. At Lys-92 the chain carries N6-(beta-hydroxybutyryl)lysine; alternate. Lys-92 is modified (N6-acetyllysine; alternate). Residues 93–214 (GTLVQTKGTG…KPKKAAPKKK (122 aa)) form a disordered region. Residue Ser-106 is modified to Phosphoserine. At Lys-108 the chain carries N6-(beta-hydroxybutyryl)lysine. The segment covering 116–144 (KASTTKVTVKAKASGAAKKPKKTAGAAAK) has biased composition (low complexity). Lys-121 carries the N6-acetyllysine modification. Basic residues-rich tracts occupy residues 145–179 (KTVK…KKVA) and 186–214 (KAVK…PKKK). Residue Thr-202 is modified to Phosphothreonine.

The protein belongs to the histone H1/H5 family. As to quaternary structure, interacts with DFFB. In terms of processing, H1 histones are progressively phosphorylated during the cell cycle, becoming maximally phosphorylated during late G2 phase and M phase, and being dephosphorylated sharply thereafter. Post-translationally, citrullination at Arg-56 (H1R54ci) by PADI4 takes place within the DNA-binding site of H1 and results in its displacement from chromatin and global chromatin decondensation, thereby promoting pluripotency and stem cell maintenance.

The protein resides in the nucleus. The protein localises to the chromosome. In terms of biological role, H1 histones bind to linker DNA between nucleosomes forming the macromolecular structure known as the chromatin fiber. H1 histones are necessary for the condensation of nucleosome chains into higher-order structured fibers. Also acts as a regulator of individual gene transcription through chromatin remodeling. This Rattus norvegicus (Rat) protein is Histone H1.1.